The sequence spans 194 residues: Recombination protein RecR (194 aa).

The C4-type zinc-finger motif lies at 55 to 70; sequence CRECGNLAEGELCPIC. Residues 78-171 form the Toprim domain; that stretch reads SLLAVVESVA…RVTRPAYGLP (94 aa).

The protein belongs to the RecR family.

May play a role in DNA repair. It seems to be involved in an RecBC-independent recombinational process of DNA repair. It may act with RecF and RecO. The sequence is that of Recombination protein RecR from Thermus thermophilus (strain ATCC 27634 / DSM 579 / HB8).